The primary structure comprises 155 residues: UPF0178 protein ACICU_02858 (155 aa).

Residues 120–155 (GAGVQTGGPPPISERDKREFSSALDQTILKQKRKTA) form a disordered region.

Belongs to the UPF0178 family.

The polypeptide is UPF0178 protein ACICU_02858 (Acinetobacter baumannii (strain ACICU)).